Reading from the N-terminus, the 30-residue chain is Proteinase inhibitor CeKI (30 aa).

Belongs to the protease inhibitor I3 (leguminous Kunitz-type inhibitor) family.

Potent inhibitor of serine proteases plasma kallikrein, plasmin and coagulation factor XIIa. Weak inhibitor of serine proteases trypsin and coagulation factor Xa. Does not inhibit the serine proteases chymotrypsin, elastase or thrombin. Inhibits kinin release from HMW-kininogen by kallikrein in vitro. This Paubrasilia echinata (Pau Brasil) protein is Proteinase inhibitor CeKI.